A 334-amino-acid polypeptide reads, in one-letter code: MVLMDSVVIGGGAWGTAIANLLAFNTQRVTIFCRNTTVIDSINKRHINTKYLPTFPLNKNISATSRMDVLKNAELIFVAVPSQSMRELLQKVKENIKESVQIILCNKGIERESLLLMSEVVHEELPKNDIFVLSGPNFAHEVLSKKPSFSNLAGRNKTSYDKIANALSTETFFTKYITDINGTQILGAFKNVIAIICGLLVRMDAGSNTLSALMSLALEEARSFITIKNGNPDTIMEFCGIGDLVLTCFSNKSRNFRYGYRLVDGYSENALVEGKSTLESLHELARIHNINCVLTNTLYTVTQFNSYGTSSFEQDIKRELNSAFMSLLGCAKNP.

Residues W14, R34, and K107 each contribute to the NADPH site. Sn-glycerol 3-phosphate contacts are provided by K107 and G135. A139 contributes to the NADPH binding site. Positions 190, 243, 253, 254, and 255 each coordinate sn-glycerol 3-phosphate. Catalysis depends on K190, which acts as the Proton acceptor. R254 is an NADPH binding site. 2 residues coordinate NADPH: V272 and E273.

The protein belongs to the NAD-dependent glycerol-3-phosphate dehydrogenase family.

It is found in the cytoplasm. It catalyses the reaction sn-glycerol 3-phosphate + NAD(+) = dihydroxyacetone phosphate + NADH + H(+). The catalysed reaction is sn-glycerol 3-phosphate + NADP(+) = dihydroxyacetone phosphate + NADPH + H(+). It functions in the pathway membrane lipid metabolism; glycerophospholipid metabolism. Its function is as follows. Catalyzes the reduction of the glycolytic intermediate dihydroxyacetone phosphate (DHAP) to sn-glycerol 3-phosphate (G3P), the key precursor for phospholipid synthesis. The chain is Glycerol-3-phosphate dehydrogenase [NAD(P)+] from Neorickettsia sennetsu (strain ATCC VR-367 / Miyayama) (Ehrlichia sennetsu).